A 1178-amino-acid chain; its full sequence is Integrin alpha-2 (1178 aa).

The first 26 residues, 1-26 (MGPGQAGGALLLRLLMLVQGILNCLA), serve as a signal peptide directing secretion. Residues 27-1129 (YNVGLPGAKI…KPTEKAEVPT (1103 aa)) are Extracellular-facing. FG-GAP repeat units lie at residues 31 to 89 (LPGA…TATC) and 98 to 158 (ASIS…FLTS). An intrachain disulfide couples cysteine 80 to cysteine 89. N-linked (GlcNAc...) asparagine glycans are attached at residues asparagine 102 and asparagine 109. The VWFA domain occupies 185 to 362 (WEAVKNFLVK…TLGEQIFSIE (178 aa)). 5 FG-GAP repeats span residues 363-417 (GTVQ…VIFP), 420-472 (AFDQ…KQGN), 474-536 (TVIQ…ILNQ), 537-595 (HQFL…TIRT), and 601-661 (ILGS…FTPD). Asparagine 429, asparagine 457, and asparagine 472 each carry an N-linked (GlcNAc...) asparagine glycan. Residues 480-482 (RGD) carry the Cell attachment site motif. Residues aspartate 496, aspartate 498, aspartate 500, aspartate 504, aspartate 560, asparagine 562, aspartate 564, aspartate 568, aspartate 624, asparagine 626, aspartate 628, and aspartate 632 each contribute to the Ca(2+) site. 5 disulfide bridges follow: cysteine 677–cysteine 734, cysteine 786–cysteine 792, cysteine 862–cysteine 873, cysteine 1016–cysteine 1047, and cysteine 1052–cysteine 1057. The N-linked (GlcNAc...) asparagine glycan is linked to asparagine 696. N-linked (GlcNAc...) asparagine glycans are attached at residues asparagine 1054, asparagine 1071, and asparagine 1078. The helical transmembrane segment at 1130 to 1151 (GVIIGSIIAGILLLLAMTAGLW) threads the bilayer. Residues 1152-1178 (KLGFFKRQYKKMGQNPDEMDETTELNS) are Cytoplasmic-facing. A GFFKR motif motif is present at residues 1154–1158 (GFFKR).

This sequence belongs to the integrin alpha chain family. Heterodimer of an alpha and a beta subunit. Alpha-2 associates with beta-1. Interacts with HPS5 and RAB21.

It localises to the membrane. Functionally, integrin alpha-2/beta-1 is a collagen receptor, being responsible for adhesion of platelets and other cells to collagens, modulation of collagen and collagenase gene expression, force generation and organization of newly synthesized extracellular matrix. It is also a receptor for laminins, collagen C-propeptides and E-cadherin. Mice homozygous for a null mutation in the alpha-2 die very early in embryogenesis. In Mus musculus (Mouse), this protein is Integrin alpha-2 (Itga2).